Reading from the N-terminus, the 510-residue chain is D-alanine--D-alanyl carrier protein ligase (510 aa).

Residue 157-158 (TS) participates in ATP binding. D202 serves as a coordination point for D-alanine. Residue 297–302 (NTYGPT) coordinates ATP. Residue V306 coordinates D-alanine. ATP is bound by residues D389 and K498. Residue K498 coordinates D-alanine.

It belongs to the ATP-dependent AMP-binding enzyme family. DltA subfamily.

The protein localises to the cytoplasm. It carries out the reaction holo-[D-alanyl-carrier protein] + D-alanine + ATP = D-alanyl-[D-alanyl-carrier protein] + AMP + diphosphate. Its pathway is cell wall biogenesis; lipoteichoic acid biosynthesis. In terms of biological role, catalyzes the first step in the D-alanylation of lipoteichoic acid (LTA), the activation of D-alanine and its transfer onto the D-alanyl carrier protein (Dcp) DltC. In an ATP-dependent two-step reaction, forms a high energy D-alanyl-AMP intermediate, followed by transfer of the D-alanyl residue as a thiol ester to the phosphopantheinyl prosthetic group of the Dcp. D-alanylation of LTA plays an important role in modulating the properties of the cell wall in Gram-positive bacteria, influencing the net charge of the cell wall. The polypeptide is D-alanine--D-alanyl carrier protein ligase (Listeria innocua serovar 6a (strain ATCC BAA-680 / CLIP 11262)).